Reading from the N-terminus, the 364-residue chain is Methylthioribose-1-phosphate isomerase (364 aa).

Substrate contacts are provided by residues 53-55, R90, and Q200; that span reads RGA. The active-site Proton donor is D241. 251–252 provides a ligand contact to substrate; that stretch reads NK.

It belongs to the eIF-2B alpha/beta/delta subunits family. MtnA subfamily.

It carries out the reaction 5-(methylsulfanyl)-alpha-D-ribose 1-phosphate = 5-(methylsulfanyl)-D-ribulose 1-phosphate. The protein operates within amino-acid biosynthesis; L-methionine biosynthesis via salvage pathway; L-methionine from S-methyl-5-thio-alpha-D-ribose 1-phosphate: step 1/6. Its function is as follows. Catalyzes the interconversion of methylthioribose-1-phosphate (MTR-1-P) into methylthioribulose-1-phosphate (MTRu-1-P). This Methylobacterium nodulans (strain LMG 21967 / CNCM I-2342 / ORS 2060) protein is Methylthioribose-1-phosphate isomerase.